Consider the following 341-residue polypeptide: L-threonine 3-dehydrogenase (341 aa).

Position 38 (Cys-38) interacts with Zn(2+). Residues Thr-40 and His-43 each act as charge relay system in the active site. Residues His-63, Glu-64, Cys-93, Cys-96, Cys-99, and Cys-107 each coordinate Zn(2+). Residues Ile-175, Asp-195, Arg-200, 262-264 (LGI), and 286-287 (IY) each bind NAD(+).

This sequence belongs to the zinc-containing alcohol dehydrogenase family. Homotetramer. Zn(2+) is required as a cofactor.

It localises to the cytoplasm. The catalysed reaction is L-threonine + NAD(+) = (2S)-2-amino-3-oxobutanoate + NADH + H(+). It functions in the pathway amino-acid degradation; L-threonine degradation via oxydo-reductase pathway; glycine from L-threonine: step 1/2. In terms of biological role, catalyzes the NAD(+)-dependent oxidation of L-threonine to 2-amino-3-ketobutyrate. This Shewanella sp. (strain MR-7) protein is L-threonine 3-dehydrogenase.